Reading from the N-terminus, the 577-residue chain is Aspartate--tRNA ligase (577 aa).

Glutamate 171 serves as a coordination point for L-aspartate. The tract at residues 195-198 (QLFK) is aspartate. Arginine 217 is a binding site for L-aspartate. ATP-binding positions include 217–219 (RDE) and glutamine 226. Position 437 (histidine 437) interacts with L-aspartate. Glutamate 472 lines the ATP pocket. Residue arginine 479 coordinates L-aspartate. 524–527 (GFDR) is an ATP binding site.

This sequence belongs to the class-II aminoacyl-tRNA synthetase family. Type 1 subfamily. As to quaternary structure, homodimer.

It is found in the cytoplasm. It catalyses the reaction tRNA(Asp) + L-aspartate + ATP = L-aspartyl-tRNA(Asp) + AMP + diphosphate. In terms of biological role, catalyzes the attachment of L-aspartate to tRNA(Asp) in a two-step reaction: L-aspartate is first activated by ATP to form Asp-AMP and then transferred to the acceptor end of tRNA(Asp). The protein is Aspartate--tRNA ligase of Deinococcus deserti (strain DSM 17065 / CIP 109153 / LMG 22923 / VCD115).